An 86-amino-acid chain; its full sequence is uncharacterized protein (86 aa).

A helical membrane pass occupies residues 12–32; that stretch reads IIFIFAIIIIVVLCVITYLYL.

It is found in the membrane. This is an uncharacterized protein from Escherichia coli (strain K12).